The following is a 68-amino-acid chain: Movement protein TGBp3 (68 aa).

The Lumenal portion of the chain corresponds to Met-1–Glu-6. The helical transmembrane segment at Ile-7–Ala-26 threads the bilayer. Residues Thr-27 to Asn-68 are Cytoplasmic-facing.

The protein belongs to the Tymovirales TGBp3 protein family.

The protein localises to the host endoplasmic reticulum membrane. In terms of biological role, plays a role in viral cell-to-cell propagation, by facilitating genome transport to neighboring plant cells through plasmosdesmata. May induce the formation of granular vesicles derived from the Endoplasmic reticulum, which align on actin filaments. In Papaya mosaic potexvirus (PMV), this protein is Movement protein TGBp3.